The following is a 413-amino-acid chain: Transcription factor bHLH23 (413 aa).

The tract at residues 40–75 (SSQTQTPSCDPPLILRGSGSGDGEGNGPLPQPPPPL) is disordered. T186 carries the phosphothreonine modification. S191 carries the phosphoserine modification. 2 disordered regions span residues 232–278 (TEPV…RSRA) and 391–413 (ETEQ…KMFS). The segment covering 246 to 257 (TDERKRKTREET) has biased composition (basic and acidic residues). A bHLH domain is found at 277–326 (RAAIMHKLSERRRRQKINEMMKALQELLPRCTKTDRSSMLDDVIEYVKSL).

In terms of assembly, homodimer. As to expression, expressed constitutively in leaves, stems, and flowers.

It localises to the nucleus. This Arabidopsis thaliana (Mouse-ear cress) protein is Transcription factor bHLH23 (BHLH23).